The primary structure comprises 256 residues: 5'-nucleotidase SurE (256 aa).

A divalent metal cation contacts are provided by Asp-8, Asp-9, Ser-39, and Asn-91.

This sequence belongs to the SurE nucleotidase family. It depends on a divalent metal cation as a cofactor.

It is found in the cytoplasm. The enzyme catalyses a ribonucleoside 5'-phosphate + H2O = a ribonucleoside + phosphate. Functionally, nucleotidase that shows phosphatase activity on nucleoside 5'-monophosphates. In Marinobacter nauticus (strain ATCC 700491 / DSM 11845 / VT8) (Marinobacter aquaeolei), this protein is 5'-nucleotidase SurE.